Reading from the N-terminus, the 87-residue chain is Gibberellin-regulated protein 8 (87 aa).

Residues 1-25 (MKLVVVQFFIISLLLTSSFSVLSSA) form the signal peptide.

This sequence belongs to the GASA family. Post-translationally, six disulfide bonds may be present. Expressed in roots and developing seeds.

Its subcellular location is the secreted. Its function is as follows. Gibberellin-regulated protein that may function in hormonal controlled steps of development such as seed germination, flowering and seed maturation. In Arabidopsis thaliana (Mouse-ear cress), this protein is Gibberellin-regulated protein 8.